Here is a 242-residue protein sequence, read N- to C-terminus: Protein fmp-52, mitochondrial (242 aa).

The N-terminal 87 residues, 1-87, are a transit peptide targeting the mitochondrion; it reads MSTSTPTSTA…VISSLGTTRV (87 aa). Positions 33–58 are disordered; it reads SSQVQTISRRAPANPTNSSRLSPTVN. The span at 35-58 shows a compositional bias: polar residues; sequence QVQTISRRAPANPTNSSRLSPTVN.

The protein belongs to the FMP52 family.

It is found in the mitochondrion outer membrane. The chain is Protein fmp-52, mitochondrial (fmp-52) from Neurospora crassa (strain ATCC 24698 / 74-OR23-1A / CBS 708.71 / DSM 1257 / FGSC 987).